Reading from the N-terminus, the 156-residue chain is ATP synthase subunit b (156 aa).

The chain crosses the membrane as a helical span at residues 7-27; sequence FFAQMVVFFILWWVVAKFIWP.

The protein belongs to the ATPase B chain family. F-type ATPases have 2 components, F(1) - the catalytic core - and F(0) - the membrane proton channel. F(1) has five subunits: alpha(3), beta(3), gamma(1), delta(1), epsilon(1). F(0) has three main subunits: a(1), b(2) and c(10-14). The alpha and beta chains form an alternating ring which encloses part of the gamma chain. F(1) is attached to F(0) by a central stalk formed by the gamma and epsilon chains, while a peripheral stalk is formed by the delta and b chains.

It is found in the cell inner membrane. Its function is as follows. F(1)F(0) ATP synthase produces ATP from ADP in the presence of a proton or sodium gradient. F-type ATPases consist of two structural domains, F(1) containing the extramembraneous catalytic core and F(0) containing the membrane proton channel, linked together by a central stalk and a peripheral stalk. During catalysis, ATP synthesis in the catalytic domain of F(1) is coupled via a rotary mechanism of the central stalk subunits to proton translocation. Functionally, component of the F(0) channel, it forms part of the peripheral stalk, linking F(1) to F(0). The polypeptide is ATP synthase subunit b (Cupriavidus taiwanensis (strain DSM 17343 / BCRC 17206 / CCUG 44338 / CIP 107171 / LMG 19424 / R1) (Ralstonia taiwanensis (strain LMG 19424))).